Consider the following 732-residue polypeptide: Catalase-peroxidase (732 aa).

The disordered stretch occupies residues 1–23; that stretch reads MSEQSKCPVTGRTAGHPVAGGGM. The segment at residues 97 to 220 is a cross-link (tryptophyl-tyrosyl-methioninium (Trp-Tyr) (with M-246)); the sequence is WHSAGTYRTS…LAAVQMGLIY (124 aa). The Proton acceptor role is filled by His-98. The tryptophyl-tyrosyl-methioninium (Tyr-Met) (with W-97) cross-link spans 220–246; sequence YVNPEGPDGNPDPVAAGRDIRETFARM. His-261 is a heme b binding site.

Belongs to the peroxidase family. Peroxidase/catalase subfamily. In terms of assembly, homodimer or homotetramer. Requires heme b as cofactor. In terms of processing, formation of the three residue Trp-Tyr-Met cross-link is important for the catalase, but not the peroxidase activity of the enzyme.

The enzyme catalyses H2O2 + AH2 = A + 2 H2O. It carries out the reaction 2 H2O2 = O2 + 2 H2O. In terms of biological role, bifunctional enzyme with both catalase and broad-spectrum peroxidase activity. The polypeptide is Catalase-peroxidase (Chlorobium limicola (strain DSM 245 / NBRC 103803 / 6330)).